The chain runs to 177 residues: Large ribosomal subunit protein uL6 (177 aa).

It belongs to the universal ribosomal protein uL6 family. As to quaternary structure, part of the 50S ribosomal subunit.

Its function is as follows. This protein binds to the 23S rRNA, and is important in its secondary structure. It is located near the subunit interface in the base of the L7/L12 stalk, and near the tRNA binding site of the peptidyltransferase center. The sequence is that of Large ribosomal subunit protein uL6 from Aeromonas hydrophila subsp. hydrophila (strain ATCC 7966 / DSM 30187 / BCRC 13018 / CCUG 14551 / JCM 1027 / KCTC 2358 / NCIMB 9240 / NCTC 8049).